A 955-amino-acid chain; its full sequence is Protein translocase subunit SecA (955 aa).

ATP-binding positions include Gln-87, 105 to 109 (GEGKT), and Asp-494. A disordered region spans residues 861 to 955 (AAPAPAAPRP…KKAPRTKRKR (95 aa)). Residues 874–888 (QEAAQQAQGTAAPSA) are compositionally biased toward low complexity. Basic residues predominate over residues 943–955 (SKGKKAPRTKRKR).

This sequence belongs to the SecA family. In terms of assembly, monomer and homodimer. Part of the essential Sec protein translocation apparatus which comprises SecA, SecYEG and auxiliary proteins SecDF. Other proteins may also be involved.

Its subcellular location is the cell membrane. It localises to the cytoplasm. It carries out the reaction ATP + H2O + cellular proteinSide 1 = ADP + phosphate + cellular proteinSide 2.. Its function is as follows. Part of the Sec protein translocase complex. Interacts with the SecYEG preprotein conducting channel. Has a central role in coupling the hydrolysis of ATP to the transfer of proteins into and across the cell membrane, serving as an ATP-driven molecular motor driving the stepwise translocation of polypeptide chains across the membrane. The protein is Protein translocase subunit SecA of Rhodococcus opacus (strain B4).